The sequence spans 180 residues: uncharacterized protein (180 aa).

Residues 1–93 are disordered; it reads MPSSVPKTSI…LPRRRNPGWV (93 aa). Low complexity-rich tracts occupy residues 9–25 and 47–64; these read SIESLGSPSSLSSSQAS and LTSSTESLGYLSSLSSSQ.

This is an uncharacterized protein from Homo sapiens (Human).